We begin with the raw amino-acid sequence, 436 residues long: Histidine--tRNA ligase 1 (436 aa).

This sequence belongs to the class-II aminoacyl-tRNA synthetase family. In terms of assembly, homodimer.

It is found in the cytoplasm. It carries out the reaction tRNA(His) + L-histidine + ATP = L-histidyl-tRNA(His) + AMP + diphosphate + H(+). This is Histidine--tRNA ligase 1 from Bacillus cereus (strain ATCC 10987 / NRS 248).